The primary structure comprises 874 residues: Alanine--tRNA ligase (874 aa).

The Zn(2+) site is built by His-562, His-566, Cys-665, and His-669.

This sequence belongs to the class-II aminoacyl-tRNA synthetase family. Zn(2+) serves as cofactor.

The protein resides in the cytoplasm. It carries out the reaction tRNA(Ala) + L-alanine + ATP = L-alanyl-tRNA(Ala) + AMP + diphosphate. Its function is as follows. Catalyzes the attachment of alanine to tRNA(Ala) in a two-step reaction: alanine is first activated by ATP to form Ala-AMP and then transferred to the acceptor end of tRNA(Ala). Also edits incorrectly charged Ser-tRNA(Ala) and Gly-tRNA(Ala) via its editing domain. This is Alanine--tRNA ligase from Pseudomonas entomophila (strain L48).